A 166-amino-acid chain; its full sequence is Large ribosomal subunit protein uL10 (166 aa).

This sequence belongs to the universal ribosomal protein uL10 family. As to quaternary structure, part of the ribosomal stalk of the 50S ribosomal subunit. The N-terminus interacts with L11 and the large rRNA to form the base of the stalk. The C-terminus forms an elongated spine to which L12 dimers bind in a sequential fashion forming a multimeric L10(L12)X complex.

Its function is as follows. Forms part of the ribosomal stalk, playing a central role in the interaction of the ribosome with GTP-bound translation factors. The protein is Large ribosomal subunit protein uL10 of Shewanella oneidensis (strain ATCC 700550 / JCM 31522 / CIP 106686 / LMG 19005 / NCIMB 14063 / MR-1).